A 468-amino-acid polypeptide reads, in one-letter code: MEFSTKTEILQEQQAGAQLFVCTEEAQLNHPTALALLSSLEEGQNFADTKIPTGNGLQAVAVCCLKSTGRAALNKAAAEAAKWAQNQETVNVDVHAFEEAQAAAVAEAFAIAFGNAAYRFDRYKKEAKPAKFAEAVFHSAHEAAVKEALRVAEAQVYGQSLCRDLGNAAPNECTPEFLARTAKAEAEKLGAHAKIIEKDYIKENMGSFWSVAKGSVEDPYLVELSYFGAADKEAAPVVLVGKGITFDTGGISLKPGLNMDEMKFDMCGAATVISTFCAAVKLQLPINLIAVVATCENMPSGAANKPGDVVKSMKGLTIEVLNTDAEGRLILCDALTYAEQFKPKAVIDVATLTGACIVALGHDVSGVMGNNQDLVDSLLAASYNVDDKAWQLPLFETYKDQLKSNFADIPNIGTPGAGTITAATFLSYFTEGYPWAHLDIAGTAWKSGAEKGATGRPVPLLLNYLRNL.

2 residues coordinate Mn(2+): lysine 242 and aspartate 247. Residue lysine 254 is part of the active site. Residues aspartate 265, aspartate 324, and glutamate 326 each contribute to the Mn(2+) site. Arginine 328 is a catalytic residue.

Belongs to the peptidase M17 family. Mn(2+) is required as a cofactor.

Its subcellular location is the cytoplasm. The enzyme catalyses Release of an N-terminal amino acid, Xaa-|-Yaa-, in which Xaa is preferably Leu, but may be other amino acids including Pro although not Arg or Lys, and Yaa may be Pro. Amino acid amides and methyl esters are also readily hydrolyzed, but rates on arylamides are exceedingly low.. It catalyses the reaction Release of an N-terminal amino acid, preferentially leucine, but not glutamic or aspartic acids.. Presumably involved in the processing and regular turnover of intracellular proteins. Catalyzes the removal of unsubstituted N-terminal amino acids from various peptides. This is Probable cytosol aminopeptidase from Neisseria meningitidis serogroup A / serotype 4A (strain DSM 15465 / Z2491).